The following is a 446-amino-acid chain: tRNA modification GTPase MnmE (446 aa).

(6S)-5-formyl-5,6,7,8-tetrahydrofolate contacts are provided by arginine 24, glutamate 81, and lysine 120. One can recognise a TrmE-type G domain in the interval glycine 216–leucine 368. Residue asparagine 226 participates in K(+) binding. GTP contacts are provided by residues asparagine 226–serine 231, threonine 245–threonine 251, and aspartate 270–glycine 273. Serine 230 lines the Mg(2+) pocket. 3 residues coordinate K(+): threonine 245, valine 247, and threonine 250. Threonine 251 contacts Mg(2+). A (6S)-5-formyl-5,6,7,8-tetrahydrofolate-binding site is contributed by lysine 446.

Belongs to the TRAFAC class TrmE-Era-EngA-EngB-Septin-like GTPase superfamily. TrmE GTPase family. Homodimer. Heterotetramer of two MnmE and two MnmG subunits. It depends on K(+) as a cofactor.

It localises to the cytoplasm. In terms of biological role, exhibits a very high intrinsic GTPase hydrolysis rate. Involved in the addition of a carboxymethylaminomethyl (cmnm) group at the wobble position (U34) of certain tRNAs, forming tRNA-cmnm(5)s(2)U34. This Xanthomonas campestris pv. campestris (strain B100) protein is tRNA modification GTPase MnmE.